A 161-amino-acid chain; its full sequence is Ribonuclease H (161 aa).

One can recognise an RNase H type-1 domain in the interval 1–142 (MLKLVKMFSD…CDKIARQSAQ (142 aa)). The Mg(2+) site is built by D10, E48, D70, and D134.

This sequence belongs to the RNase H family. Monomer. The cofactor is Mg(2+).

It is found in the cytoplasm. It carries out the reaction Endonucleolytic cleavage to 5'-phosphomonoester.. Its function is as follows. Endonuclease that specifically degrades the RNA of RNA-DNA hybrids. The polypeptide is Ribonuclease H (rnhA) (Buchnera aphidicola subsp. Schizaphis graminum (strain Sg)).